Here is a 1712-residue protein sequence, read N- to C-terminus: Collagen alpha-2(IV) chain (1712 aa).

The signal sequence occupies residues 1-25; the sequence is MGRDQRAVAGPALRRWLLLGTVTVG. A propeptide spans 26 to 183 (N-terminal propeptide (7S domain)); that stretch reads FLAQSVLAGV…LPKEERDRYR (158 aa). 5 disordered regions span residues 60–237, 302–448, 507–640, 690–906, and 1157–1480; these read RGQP…GFYG, GLRG…PDGF, INGE…DAGL, GLPG…SPGF, and TGPP…GLPG. Residues 68-84 are compositionally biased toward low complexity; the sequence is PQGYNGPPGLQGFPGLQ. Gly residues predominate over residues 121–130; that stretch reads GHPGQGGPRG. N138 carries N-linked (GlcNAc...) asparagine glycosylation. Residues 140–153 show a composition bias toward low complexity; that stretch reads TQGDSGPQGPPGSE. The segment covering 175–186 has biased composition (basic and acidic residues); the sequence is PKEERDRYRGEP. The tract at residues 184-1484 is triple-helical region; sequence GEPGEPGLVG…SPGLPGMPGR (1301 aa). 2 stretches are compositionally biased toward pro residues: residues 215-224 and 433-445; these read RPGPPGPPGP and PPGPPGLPGPPGP. Composition is skewed to basic and acidic residues over residues 511-520 and 571-582; these read PGRKGDRGDP and KGDDGSPGRDGL. Low complexity-rich tracts occupy residues 628–640 and 698–710; these read LKGQRGFPGDAGL and TGAKGLRGIPGFA. The span at 711 to 720 shows a compositional bias: gly residues; it reads GADGGPGPRG. The span at 721–730 shows a compositional bias: low complexity; sequence LPGDAGREGF. Pro residues predominate over residues 752-766; sequence DGSPGPIGLPGPDGP. Low complexity-rich tracts occupy residues 769–778, 813–823, 831–844, 1302–1328, and 1400–1421; these read ERGLPGEVLG, MPGMPGLKGQP, QPGLYGPPGLHGFP, GSAALPGSKGDTGNPGAPGTPGTKGWA, and QPGTVGPQGRRGPPGAPGEMGP. A Collagen IV NC1 domain is found at 1489–1712; that stretch reads GYLLVKHSQT…SRCQVCMKNL (224 aa). Y1490 is modified (3'-bromotyrosine). 6 disulfide bridges follow: C1504–C1593, C1537–C1590, C1549–C1555, C1612–C1708, C1646–C1705, and C1658–C1665.

The protein belongs to the type IV collagen family. In terms of assembly, there are six type IV collagen isoforms, alpha 1(IV)-alpha 6(IV), each of which can form a triple helix structure with 2 other chains to generate type IV collagen network. Interacts with EFEMP2. Prolines at the third position of the tripeptide repeating unit (G-X-Y) are hydroxylated in some or all of the chains. In terms of processing, type IV collagens contain numerous cysteine residues which are involved in inter- and intramolecular disulfide bonding. 12 of these, located in the NC1 domain, are conserved in all known type IV collagens. Post-translationally, the trimeric structure of the NC1 domains is stabilized by covalent bonds between Lys and Met residues. Proteolytic processing produces the C-terminal NC1 peptide, canstatin.

It is found in the secreted. The protein localises to the extracellular space. Its subcellular location is the extracellular matrix. It localises to the basement membrane. In terms of biological role, type IV collagen is the major structural component of glomerular basement membranes (GBM), forming a 'chicken-wire' meshwork together with laminins, proteoglycans and entactin/nidogen. Functionally, canstatin, a cleavage product corresponding to the collagen alpha 2(IV) NC1 domain, possesses both anti-angiogenic and anti-tumor cell activity. It inhibits proliferation and migration of endothelial cells, reduces mitochondrial membrane potential, and induces apoptosis. Specifically induces Fas-dependent apoptosis and activates procaspase-8 and -9 activity. Ligand for alphavbeta3 and alphavbeta5 integrins. The chain is Collagen alpha-2(IV) chain from Homo sapiens (Human).